The chain runs to 159 residues: Heterocyst differentiation protein HetP (159 aa).

The segment at 1–50 (MNQNTTGITNYNKAINPQQFDKVVEAILAGKYSWACVLMLRFAGYNPMHY) is required to complement a hetP deletion.

The protein belongs to the HetP family. As to quaternary structure, in bacterial two-hybrid assays interacts weakly with Asl1930, Alr2902 and Alr3234.

Functionally, promotes heterocyst differentiation and commitment when nitrogen is limiting. Interplay between the 4 HetP paralogs controls the timing of commitment to heterocyst formation and its duration. Epistatic analysis show that the 3 paralogs act upstream of hetP to delay commitment (asl1930, alr3234) or inhibit development (alr2902). Asl1930 and Alr3234 must also attenuate the activity of Alr2902. Required for heterocyst formation. Functions directly downstream of master regulator HetR to promote heterocyst differentiation, functioning downstream of patterning (cell choice). Partially functionally redundant with homologs alr2902 and asl1930 but not alr3234. Overexpression leads to more than wild-type levels of heterocysts. Overexpression in the absence of hetR partially bypasses hetR deletion, allowing differentiation of heterocysts, although they only fix nitrogen in the absence of oxygen (a Fox- Fix+ phenotype), suggesting they are not fully. The protein is Heterocyst differentiation protein HetP of Nostoc sp. (strain PCC 7120 / SAG 25.82 / UTEX 2576).